Here is an 88-residue protein sequence, read N- to C-terminus: MAHKKAGGSSRNGRDSAGRRLGVKKFGSEAVIPGNIIVRQRGTKWHPGTNVGMGKDHTLFALVPGKVQFETRRGRDFVTVVPLAQAAE.

The disordered stretch occupies residues 1–23; it reads MAHKKAGGSSRNGRDSAGRRLGV.

Belongs to the bacterial ribosomal protein bL27 family.

The polypeptide is Large ribosomal subunit protein bL27 (Methylorubrum extorquens (strain CM4 / NCIMB 13688) (Methylobacterium extorquens)).